Reading from the N-terminus, the 262-residue chain is Aquaporin TIP3-1 (262 aa).

2 consecutive transmembrane segments (helical) span residues 27–47 (AAIS…GSVL) and 61–81 (GLVA…AVAV). Residues 89-91 (NPA) carry the NPA 1 motif. 3 helical membrane passes run 104–124 (LVRA…ATLL), 148–168 (AVLL…ATVI), and 175–195 (VGTI…LAGG). Positions 203-205 (NPA) match the NPA 2 motif. A helical membrane pass occupies residues 223-243 (YWLGPFLGAGLAGLVYEYLVI).

This sequence belongs to the MIP/aquaporin (TC 1.A.8) family. TIP (TC 1.A.8.10) subfamily.

Its subcellular location is the vacuole membrane. In terms of biological role, aquaporins facilitate the transport of water and small neutral solutes across cell membranes. The protein is Aquaporin TIP3-1 (TIP3-1) of Zea mays (Maize).